Here is a 91-residue protein sequence, read N- to C-terminus: Small ribosomal subunit protein uS19 (91 aa).

The protein belongs to the universal ribosomal protein uS19 family.

Protein S19 forms a complex with S13 that binds strongly to the 16S ribosomal RNA. The polypeptide is Small ribosomal subunit protein uS19 (Psychrobacter sp. (strain PRwf-1)).